Here is a 201-residue protein sequence, read N- to C-terminus: Small ribosomal subunit protein uS4 (201 aa).

Positions 91–157 constitute an S4 RNA-binding domain; it reads SRLDNVVYRA…VPFQIARETA (67 aa).

It belongs to the universal ribosomal protein uS4 family. As to quaternary structure, part of the 30S ribosomal subunit. Contacts protein S5. The interaction surface between S4 and S5 is involved in control of translational fidelity.

One of the primary rRNA binding proteins, it binds directly to 16S rRNA where it nucleates assembly of the body of the 30S subunit. Functionally, with S5 and S12 plays an important role in translational accuracy. The polypeptide is Small ribosomal subunit protein uS4 (Mycolicibacterium paratuberculosis (strain ATCC BAA-968 / K-10) (Mycobacterium paratuberculosis)).